The sequence spans 645 residues: Cysteine-rich receptor-like protein kinase 19 (645 aa).

An N-terminal signal peptide occupies residues M1–A20. Residues Q21–S262 lie on the Extracellular side of the membrane. 2 Gnk2-homologous domains span residues F24–I129 and T135–F239. N-linked (GlcNAc...) asparagine glycans are attached at residues N29, N39, N57, N101, N185, N241, and N260. A helical transmembrane segment spans residues V263–F283. Over S284–R645 the chain is Cytoplasmic. The Protein kinase domain occupies F326–I603. ATP is bound by residues L332–V340 and K354. Position 399 is a phosphotyrosine (Y399). D451 acts as the Proton acceptor in catalysis. A Phosphothreonine modification is found at T491. Phosphotyrosine is present on Y499. The segment at R616–R645 is disordered. The span at E620–C632 shows a compositional bias: polar residues.

This sequence belongs to the protein kinase superfamily. Ser/Thr protein kinase family. CRK subfamily. In terms of assembly, interacts with MWL1.

Its subcellular location is the membrane. The catalysed reaction is L-seryl-[protein] + ATP = O-phospho-L-seryl-[protein] + ADP + H(+). It catalyses the reaction L-threonyl-[protein] + ATP = O-phospho-L-threonyl-[protein] + ADP + H(+). The protein is Cysteine-rich receptor-like protein kinase 19 (CRK19) of Arabidopsis thaliana (Mouse-ear cress).